Here is a 594-residue protein sequence, read N- to C-terminus: Fidgetin-like protein 1 (594 aa).

Disordered stretches follow at residues 1–79 (MYSP…DDEL) and 239–261 (QSIG…KRCS). The segment covering 56-73 (PSDSAQQQPPFKSRSQQN) has biased composition (polar residues). ATP contacts are provided by residues Ala319 and 359–364 (GTGKTM).

It belongs to the AAA ATPase family. As to quaternary structure, hexamer. It depends on Mg(2+) as a cofactor. Expressed in germ cells.

It localises to the nucleus. It catalyses the reaction ATP + H2O = ADP + phosphate + H(+). Has a role in spindle assembly which acts in the progression through mitosis during embryogenesis. Required for fertility. In Caenorhabditis elegans, this protein is Fidgetin-like protein 1 (figl-1).